A 792-amino-acid polypeptide reads, in one-letter code: MKVPVKWLKDYVDFDINAKELGDRLTLSGSKVEEIITSGDEITNVVTGKILKIDPHPDAEKLVICSVDVGKNEPIQIVTGAQNMKENDIVPVALHGSTLPGGVKIKKGKLRGVVSNGMMCAKEELGIADEEHVHGLMILDENTPIGKDIKEVLGLDNPVIDFEITSNRPDCLSVIGIARETAATINTKYRNVKIDFSETKGRNIKEELEVEVKDKLCRRYMARVIKNVKIEDSPAWMQERLMLAGVRPINNIVDITNFVMLEVGQPMHAFDKKMITSNKIVIERAKDGEKFTTLDSEERSLDSNVLMIKDGDKNCAIAGIMGGLDSEVAENTHEIIFESANFDGTNIRVSSQKLALRTEASGRYEKDLDPNLAEIALNRACTLIQELNAGEIVEGVIDIYPVKSEPNIVEVDYNWINNFLGIKISKEEMKEYLDRLELTTEIKGDKLEVFSPTFRCDINIKEDVAEEVARIYGYNKVPSTTVKSQSIRTGKSKIQQIKDVVTDILISSGLNESINYSFVSPKIFDKILVPEDSELRNVVKIRNPLGEDFSVMRTTTLHSMMESLARNYSHNNELAKLFEIGKVYIPSENEGEIPKERNVITIGMYGNVDYFDLKGVVENLVEILGVNKISYARESENPTFHPGKTAVIKIKNTVLGTLGEVHPDVCENYEVEERCYVAEIDLDLLLENVSLSRKYKALPKFPTVTRDISVLVDEDILVQEIENVIKRQGGTILESLNLFDVYKGKQVPQGKKSVSYALTYRDENKTLTDKDVEKIQNKVIKTLEHVLGAELR.

The 112-residue stretch at 39 to 150 (GDEITNVVTG…ENTPIGKDIK (112 aa)) folds into the tRNA-binding domain. In terms of domain architecture, B5 spans 404 to 479 (SEPNIVEVDY…RIYGYNKVPS (76 aa)). Mg(2+) contacts are provided by D457, D463, E466, and E467. The region spanning 699–792 (PKFPTVTRDI…LEHVLGAELR (94 aa)) is the FDX-ACB domain.

It belongs to the phenylalanyl-tRNA synthetase beta subunit family. Type 1 subfamily. As to quaternary structure, tetramer of two alpha and two beta subunits. Requires Mg(2+) as cofactor.

It localises to the cytoplasm. It carries out the reaction tRNA(Phe) + L-phenylalanine + ATP = L-phenylalanyl-tRNA(Phe) + AMP + diphosphate + H(+). This Clostridium acetobutylicum (strain ATCC 824 / DSM 792 / JCM 1419 / IAM 19013 / LMG 5710 / NBRC 13948 / NRRL B-527 / VKM B-1787 / 2291 / W) protein is Phenylalanine--tRNA ligase beta subunit.